Here is a 563-residue protein sequence, read N- to C-terminus: Pyruvate decarboxylase isozyme 3 (563 aa).

Serine 2 carries the post-translational modification N-acetylserine. Positions 28 and 115 each coordinate pyruvate. Lysine 212 participates in a covalent cross-link: Glycyl lysine isopeptide (Lys-Gly) (interchain with G-Cter in ubiquitin). Serine 223 bears the Phosphoserine mark. Residue lysine 233 forms a Glycyl lysine isopeptide (Lys-Gly) (interchain with G-Cter in ubiquitin) linkage. Position 266 is a phosphothreonine (threonine 266). A Glycyl lysine isopeptide (Lys-Gly) (interchain with G-Cter in ubiquitin) cross-link involves residue lysine 269. Phosphothreonine is present on threonine 353. Thiamine diphosphate-binding positions include threonine 390 and 413 to 415; that span reads GSI. Aspartate 444 is a binding site for Mg(2+). Residues 445–446 and 471–476 contribute to the thiamine diphosphate site; these read GS and NDGYTI. Mg(2+) is bound by residues asparagine 471 and glycine 473. Glutamate 477 provides a ligand contact to pyruvate. Lysine 505 is covalently cross-linked (Glycyl lysine isopeptide (Lys-Gly) (interchain with G-Cter in ubiquitin)). Threonine 522 is subject to Phosphothreonine.

It belongs to the TPP enzyme family. Homotetramer. Requires Mg(2+) as cofactor. The cofactor is thiamine diphosphate.

It localises to the cytoplasm. It catalyses the reaction pyruvate + H(+) = acetaldehyde + CO2. It carries out the reaction 3-methyl-2-oxobutanoate + H(+) = 2-methylpropanal + CO2. The enzyme catalyses (S)-3-methyl-2-oxopentanoate + H(+) = 2-methylbutanal + CO2. The catalysed reaction is indole-3-pyruvate + H(+) = indole-3-acetaldehyde + CO2. It catalyses the reaction 3-phenylpyruvate + H(+) = 2-phenylacetaldehyde + CO2. It carries out the reaction 2-oxobutanoate + H(+) = propanal + CO2. The enzyme catalyses 2-oxopentanoate + H(+) = butanal + CO2. The catalysed reaction is 2 acetaldehyde = acetoin. It catalyses the reaction acetaldehyde + pyruvate + H(+) = acetoin + CO2. It functions in the pathway fermentation; ethanol fermentation. The protein operates within amino-acid degradation; Ehrlich pathway. Functionally, minor of three pyruvate decarboxylases (PDC1, PDC5, PDC6) implicated in the nonoxidative conversion of pyruvate to acetaldehyde and carbon dioxide during alcoholic fermentation. Most of the produced acetaldehyde is subsequently reduced to ethanol, but some is required for cytosolic acetyl-CoA production for biosynthetic pathways. The enzyme is also one of five 2-oxo acid decarboxylases (PDC1, PDC5, PDC6, ARO10, and THI3) able to decarboxylate more complex 2-oxo acids (alpha-keto-acids) than pyruvate, which seem mainly involved in amino acid catabolism. Here the enzyme catalyzes the decarboxylation of amino acids, which, in a first step, have been transaminated to the corresponding 2-oxo acids. In a third step, the resulting aldehydes are reduced to alcohols, collectively referred to as fusel oils or alcohols. Its preferred substrates are the transaminated amino acids derived from threonine (2-oxobutanoate), norvaline (2-oxopentanoate), valine (3-methyl-2-oxobutanoate, also alpha-keto-isovalerate), isoleucine ((3S)-3-methyl-2-oxopentanoate, also alpha-keto-beta-methylvalerate), phenylalanine (phenylpyruvate), and tryptophan (3-(indol-3-yl)pyruvate), whereas transaminated leucine is no substrate. In a side-reaction the carbanionic intermediate (or active aldehyde) generated by decarboxylation or by activation of an aldehyde can react with an aldehyde via condensation (or carboligation) yielding a 2-hydroxy ketone, collectively called acyloins. The expression level of this protein in the presence of fermentable carbon sources is so low that it cannot compensate for the other two pyruvate decarboxylases to sustain fermentation. The protein is Pyruvate decarboxylase isozyme 3 (PDC6) of Saccharomyces cerevisiae (strain ATCC 204508 / S288c) (Baker's yeast).